The sequence spans 266 residues: Isoprenyl transferase (266 aa).

The active site involves aspartate 36. Aspartate 36 lines the Mg(2+) pocket. Substrate-binding positions include 37 to 40 (GNGR), tryptophan 41, arginine 49, histidine 53, and 81 to 83 (STE). Asparagine 84 functions as the Proton acceptor in the catalytic mechanism. Substrate contacts are provided by residues tryptophan 85, arginine 87, arginine 204, and 210–212 (RIS). Residue glutamate 223 coordinates Mg(2+).

The protein belongs to the UPP synthase family. Homodimer. The cofactor is Mg(2+).

Catalyzes the condensation of isopentenyl diphosphate (IPP) with allylic pyrophosphates generating different type of terpenoids. The protein is Isoprenyl transferase of Prochlorococcus marinus (strain SARG / CCMP1375 / SS120).